The primary structure comprises 354 residues: MSLESVRYSRGSLQVLNQLLLPHKSEYEPVTGVQQGADAIRTMKVRGAPAIAIVGVLSLAVELTTKPCQDVPSLITFVRESLHHLVSARPTAVNMKKAADELNAFLAEEADKPGATSQRLTESVVQWAESLLKKDVEDNQMIGDFGAKHILEKAGPTEKVCMLTHCNTGSLATAGYGTALGVVRSLHALGRLSHVFCTETRPYNQGSRLTAYELVYEKIPATLITDSMASVTMRERKVTAVVVGADRVVANGDTANKIGTYQLAIIAKYHGIPFYVAAPSTSCDLSLPTGGSIVIEERPSHELTDINGIRIAAPGIDVWNPAFDVTPHELITGIITERGVFKPEELKDGLTKGQ.

Asp-246 (proton donor) is an active-site residue.

This sequence belongs to the eIF-2B alpha/beta/delta subunits family. MtnA subfamily.

The protein localises to the cytoplasm. It is found in the nucleus. It catalyses the reaction 5-(methylsulfanyl)-alpha-D-ribose 1-phosphate = 5-(methylsulfanyl)-D-ribulose 1-phosphate. It functions in the pathway amino-acid biosynthesis; L-methionine biosynthesis via salvage pathway; L-methionine from S-methyl-5-thio-alpha-D-ribose 1-phosphate: step 1/6. Functionally, catalyzes the interconversion of methylthioribose-1-phosphate (MTR-1-P) into methylthioribulose-1-phosphate (MTRu-1-P). The sequence is that of Methylthioribose-1-phosphate isomerase (mri1) from Xenopus laevis (African clawed frog).